The sequence spans 38 residues: Large ribosomal subunit protein bL36 (38 aa).

It belongs to the bacterial ribosomal protein bL36 family.

The polypeptide is Large ribosomal subunit protein bL36 (Chloroherpeton thalassium (strain ATCC 35110 / GB-78)).